Reading from the N-terminus, the 2111-residue chain is MTQNCVAPVAIIGMACRLPGAINSPQQLWEALLRGDDFVTEIPTGRWDAEEYYDPEPGVPGRSVSKWGAFLDDPAAFDPEFFGITEREAAAIDPQHRLLLETAWEAVEHSGLNPAGLAGSATGVFMGLTHNDYAHLAADAKALEGPYGFTGTSFSLASGRIAYALGVHGPAITVDTACSSSLSAIHMACRSLHDGESDVALAGGVSVLLEPRKAAGGSAAGMLSPTGHCHAFDTAADGFVSAEGCVVLTLKRLDDAVADGDRILAVIRGTATNQDGRTVNIATPSADAQAKVYRMALKAAGVEPGTVGLVEAHGTGTPVGDPLEFSSLAEVYGTDGPCALGSIKTNFGHTQSAAGALGVMKAVLALQHNVIPQNLHFTRLPDQMAEIETGLFVPETITPWPVREGQPRRAAVSAYGLSGTNVHAVLEQAPESPAETAAEAISPKAGNALVFPVSASSADALRSTAQHLADWLLRSGDGNGRGPAIDLGDLAYTLARRRGFRAARSAVLAGDRGTLVEGLRQIADGEAMPQQAVTNDDRGPVWVFSGQGSQWASMGAELLDREPAFAAAIAELEPLIAAESDFSVTEALTASETVTGIDRVQPTIFAVQVALAAAMRSHGVVPGAVIGHSMGEVAASVVSGALSLEDGVKVICRRTRLMTRIAGSGAMAMVELPAQQVLSELASRGVDDVVLSVVASPQSTVVGGATASVRELIEMWESRGVMAREIAVDVASHSPQVDPILDDLIEALADLDPAEPEIPYYSATLYDPRDYADYDAYYWADNLRHTVRFSAAVQAALEDGHRVFAELSPHPLLTHPVEQTARSLDMPLAVFAAMRRQQEMPHGLLGFVADLHSAGAAVDFSVLYPTGRLLDAPLPAWTHSTLLLDRELESSAPGVPSVSVHPLLGSHVVLPQEPEEHLWQGDVGTEAHPWLSDHRVHQVAVLPGAAYCEMALAAVTPVLGDTGEVHDLKFHDMLLLDDATPVWVSAAVTAPGTAEFGVETHQSGDRTQRATAVLRGDVDAERPAAHSIDALLAAHPNRVDGDELRAGFGTVGIGHGAAFAGLSEAYVATAAEPTVVAAVALPGPLRSGQRGYTVHPALLDACFQSVIAHPEVQNIASGMLLPLGVRRLRAYGSTRNVRYCLSRIVKADSFGVEADLELLDADGTVLLSAMGLQLGTGNSDKAEEERLLDERLLTIEWQQRELPRPEGSETVDAGSWLVILAGDDDENPRAAGVVSALIGAGMPTTTMAWSHDADHDAQAAALTARLDEQPLAGVAVIVGDSETGTDAHDVGADARRGADHVRHLVRIARTLADAVGEPPRLYVVTHRSQHVLDTDEPYLEHSGLRGLIRVVGMEHPRLRATQIDVDDSTAHEALVRQLLSGSPEDETAWRDGQWYAARLCPSPLRAAERRTAVADNASEGMRLVVRNPGDLESMELVTFERGTPGPGQIEVAVKASSINFADVLVAFGRCPSFDGRLPELGSEFGGVVTAVGPGVTTHRVGDRVGGVSANGCWSNFVTCEADLATKLPEGISEHEAAAVGLAYGTVWLGLTELARMSAGDKILIHSATGGVGQAAIAVARAAGAEIYATAGSEKRRQLLRDWGIEHVYDSRTTAFADQIRTDTDGYGVDIVLNSVTGPAQRAGLELLAFGGRFVEIGKRDIYADTRLGLFPFRRNLSFYAVDLALMTVTHPQKIRDLLATVYRLIADGTLPLPEITHYPLEEAATAIRIMGGAQHTGKLVIDIPDTGQSQVVVPPEQVPVFRGDGAYVITGGLGGLGLFLAERMAAAGCGRIVVNSRSAPSTRSSEIIELIRATGADIVVECGDIAEPDTALRLVAAATQTGLPLRGVLHAAAVVEDATLANITDELVEHDWAPKVYGAWNLHQAVQSGGPATSELDWFCAFSSAAALVGSPGQGAYAAANSWLDAFMQWRRAQGLPATSIAWGAWGEIGRGTAMAEGDNAIAPDEGAYAFEAILRHDRVYNGYAPVLGASWLTAFAQRSPFAELFLADTQGASETRKLRSELAALPREEWPTHLRRLIAEQVGLLLRRTVDPDRPLSEYGLDSLGHLELRTRIETETGVRVSAMDMTTIRGLAQRLCEMLDTDDAVSAPS.

A signal peptide spans 1 to 15 (MTQNCVAPVAIIGMA). Cysteine 16 carries the N-palmitoyl cysteine lipid modification. Cysteine 16 is lipidated: S-diacylglycerol cysteine. A Ketosynthase family 3 (KS3) domain is found at 16-428 (CRLPGAINSP…GTNVHAVLEQ (413 aa)). Catalysis depends on cysteine 178, which acts as the Acyl-thioester intermediate; for beta-ketoacyl synthase activity. Catalysis depends on for beta-ketoacyl synthase activity residues histidine 313 and histidine 349. The tract at residues 430–537 (PESPAETAAE…MPQQAVTNDD (108 aa)) is linker domain (LD). The segment at 538 to 837 (RGPVWVFSGQ…LAVFAAMRRQ (300 aa)) is acyltransferase (AT). Serine 629 functions as the Acyl-ester intermediate; for acyltransferase activity in the catalytic mechanism. Residues 896–1176 (PSVSVHPLLG…LSAMGLQLGT (281 aa)) are dehydratase (DH). The N-terminal hotdog fold stretch occupies residues 901–1025 (HPLLGSHVVL…GDVDAERPAA (125 aa)). In terms of domain architecture, PKS/mFAS DH spans 901–1183 (HPLLGSHVVL…LGTGNSDKAE (283 aa)). Residue histidine 934 is the Proton acceptor; for dehydratase activity of the active site. The interval 1036–1183 (PNRVDGDELR…LGTGNSDKAE (148 aa)) is C-terminal hotdog fold. The active-site Proton donor; for dehydratase activity is the aspartate 1100. The tract at residues 1215–1391 (SWLVILAGDD…SPEDETAWRD (177 aa)) is pseudo beta-ketoacyl reductase (PsiKR). An enoylreductase (ER) region spans residues 1419-1743 (EGMRLVVRNP…QHTGKLVIDI (325 aa)). The segment at 1765-2008 (GAYVITGGLG…RSPFAELFLA (244 aa)) is beta-ketoacyl reductase (KR). NADP(+) contacts are provided by residues 1773-1776 (LGGL), 1796-1799 (SRSA), 1824-1825 (DI), and 1902-1903 (FS). A Carrier domain is found at 2029-2104 (EEWPTHLRRL…QRLCEMLDTD (76 aa)). Serine 2064 carries the post-translational modification O-(pantetheine 4'-phosphoryl)serine.

In terms of assembly, homodimer.

The protein localises to the cell membrane. It functions in the pathway lipid metabolism; fatty acid biosynthesis. Functionally, polyketide synthase involved in the biosynthesis of 2,4-dimethyl-2-eicosenoic acid, a lipid component of the lipooligosaccharides (LOS) which are not located at the bacterial surface but rather in deeper compartments of the cell envelope of M.smegmatis. In Mycolicibacterium smegmatis (strain ATCC 700084 / mc(2)155) (Mycobacterium smegmatis), this protein is Mycocerosic acid synthase-like polyketide synthase.